The chain runs to 213 residues: Small ribosomal subunit protein eS1 (213 aa).

Positions Ala189–Ala213 are disordered. Acidic residues predominate over residues Val194–Ala213.

Belongs to the eukaryotic ribosomal protein eS1 family.

The protein is Small ribosomal subunit protein eS1 of Haloarcula marismortui (strain ATCC 43049 / DSM 3752 / JCM 8966 / VKM B-1809) (Halobacterium marismortui).